Here is a 425-residue protein sequence, read N- to C-terminus: Serine hydroxymethyltransferase (425 aa).

Position 132–134 (132–134 (GHL)) interacts with (6S)-5,6,7,8-tetrahydrofolate. Lys-237 carries the post-translational modification N6-(pyridoxal phosphate)lysine.

This sequence belongs to the SHMT family. As to quaternary structure, homodimer. The cofactor is pyridoxal 5'-phosphate.

The protein localises to the cytoplasm. The catalysed reaction is (6R)-5,10-methylene-5,6,7,8-tetrahydrofolate + glycine + H2O = (6S)-5,6,7,8-tetrahydrofolate + L-serine. It functions in the pathway one-carbon metabolism; tetrahydrofolate interconversion. Its pathway is amino-acid biosynthesis; glycine biosynthesis; glycine from L-serine: step 1/1. In terms of biological role, catalyzes the reversible interconversion of serine and glycine with tetrahydrofolate (THF) serving as the one-carbon carrier. This reaction serves as the major source of one-carbon groups required for the biosynthesis of purines, thymidylate, methionine, and other important biomolecules. Also exhibits THF-independent aldolase activity toward beta-hydroxyamino acids, producing glycine and aldehydes, via a retro-aldol mechanism. This Wolbachia sp. subsp. Brugia malayi (strain TRS) protein is Serine hydroxymethyltransferase.